We begin with the raw amino-acid sequence, 288 residues long: uncharacterized protein (288 aa).

Residues 126–136 are compositionally biased toward low complexity; it reads VAAPASTPVAP. Disordered regions lie at residues 126–227 and 258–288; these read VAAP…VTSV and KEKD…SSEE. Residues 143–152 are compositionally biased toward basic and acidic residues; that stretch reads RKEFKNEKWK. Positions 153–162 are enriched in basic residues; the sequence is DKKKQGRRRN. The span at 180-194 shows a compositional bias: acidic residues; the sequence is VAEECLQESSSEEGD. Residues 278–288 show a composition bias toward basic and acidic residues; it reads TLVHDRISSEE.

It belongs to the chlamydial CPn_0623/CT_504/TC_0791 family.

This is an uncharacterized protein from Chlamydia trachomatis serovar D (strain ATCC VR-885 / DSM 19411 / UW-3/Cx).